The chain runs to 233 residues: UPF0502 protein YpsIP31758_2048 (233 aa).

Belongs to the UPF0502 family.

The chain is UPF0502 protein YpsIP31758_2048 from Yersinia pseudotuberculosis serotype O:1b (strain IP 31758).